Here is a 737-residue protein sequence, read N- to C-terminus: Relaxin receptor 2 (737 aa).

The Extracellular portion of the chain corresponds to 1 to 399 (MFPLLHFIVL…SSFEDLLANN (399 aa)). Positions 27 to 64 (LCQKGYFPCGNLTKCLPRAFHCDGVDDCGNGADEDNCG) constitute an LDL-receptor class A domain. Disulfide bonds link C28–C41, C35–C54, and C48–C63. N37 is a glycosylation site (N-linked (GlcNAc...) asparagine). A glycan (N-linked (GlcNAc...) asparagine) is linked at N121. 10 LRR repeats span residues 121–142 (NTTL…VFTK), 145–166 (QLKQ…AFFG), 169–190 (NLQI…VFKD), 193–214 (QLTW…LFTG), 217–238 (SLFF…MCAQ), 241–262 (QLNW…SFLS), 265–286 (SLTV…TFSS), 289–310 (NLGE…IFKD), 313–334 (LLQK…QFES), and 337–358 (QLQS…MFQP). N-linked (GlcNAc...) asparagine glycosylation occurs at N257. Residue N318 is glycosylated (N-linked (GlcNAc...) asparagine). N361 carries an N-linked (GlcNAc...) asparagine glycan. Residues 400-420 (ILRIFVWVIAFITCFGNLFVI) traverse the membrane as a helical segment. At 421-438 (GMRSFIKAENTTHATSIK) the chain is on the cytoplasmic side. The chain crosses the membrane as a helical span at residues 439–459 (ILCCADCLMGVYLFFIGFFDI). At 460 to 478 (KYRGQYQKYALLWMESLQC) the chain is on the extracellular side. An intrachain disulfide couples C478 to C556. A helical membrane pass occupies residues 479-501 (RLMGFLAMLSTEVSVLLLTYLTL). Topologically, residues 502 to 520 (EKFLAIVFPFSNIRPGKWQ) are cytoplasmic. A helical membrane pass occupies residues 521–541 (TMVILICIWIVGFLIAVIPFW). At 542-575 (KEDYFGNFYGKNGVCFPLYYDQTEDIGSKGYSLG) the chain is on the extracellular side. A helical membrane pass occupies residues 576–596 (IFLGVNLLAFLIIVFSYTIMF). Over 597-622 (CSIKKTALQTSEVRNPIGREVAVANR) the chain is Cytoplasmic. The helical transmembrane segment at 623-643 (FFFIVFSDAICWIPVFVIKIL) threads the bilayer. The Extracellular portion of the chain corresponds to 644-653 (SLFRVEIPGT). A helical membrane pass occupies residues 654–674 (ITSWIVIFFLPVNSALNPILY). The Cytoplasmic segment spans residues 675–737 (TLTTSFFKDK…LGDSIVKPIS (63 aa)).

This sequence belongs to the G-protein coupled receptor 1 family.

It localises to the cell membrane. Its function is as follows. Receptor for relaxin. The activity of this receptor is mediated by G proteins leading to stimulation of adenylate cyclase and an increase of cAMP. May also be a receptor for Leydig insulin-like peptide (INSL3). This chain is Relaxin receptor 2 (RXFP2), found in Canis lupus familiaris (Dog).